The chain runs to 559 residues: YTH domain-containing family protein 1 (559 aa).

Residues 1-49 form a disordered region; it reads MSATSVDPQRTKGQDNKVQNGSLHQKDAVHDNDFEPYLSGQSNPSNSYP. Residue S2 is modified to N-acetylserine. Residues 24–33 show a composition bias toward basic and acidic residues; sequence HQKDAVHDND. S182 is modified (phosphoserine). The disordered stretch occupies residues 239 to 365; that stretch reads SKPAKPQPKM…PTSAPSVESH (127 aa). Composition is skewed to low complexity over residues 279-305 and 314-326; these read PAPKASAPQQTPSPQAAPQPQQVAQPL and QPQYQSPQQPLQP. Residues 343–361 are compositionally biased toward polar residues; that stretch reads GANSDSNSVGNAQPTSAPS. Residues 389–523 enclose the YTH domain; that stretch reads GRVFIIKSYS…EKAKQVLKII (135 aa). Residues 395–397, D401, 411–412, N441, W465, and W470 each bind RNA; these read KSY and WC.

This sequence belongs to the YTHDF family. YTHDF1 subfamily. In terms of assembly, interacts with CNOT1; promoting recruitment of the CCR4-NOT complex. Interacts with ribosomes. Interacts with eIF3 (EIF3A or EIF3B). Interacts with YTHDF3. Ubiquitinated by the CUL7-FBXW8 E3 ligase complex leading to degradation. Deubiquitinated and stabilized by USP5 by removing 'Lys-11'-linked polyubiquitination. As to expression, in brain, preferentially expressed in the hippocampus.

The protein resides in the cytoplasm. It is found in the P-body. It localises to the stress granule. Functionally, specifically recognizes and binds N6-methyladenosine (m6A)-containing mRNAs, and regulates their stability. M6A is a modification present at internal sites of mRNAs and some non-coding RNAs and plays a role in mRNA stability and processing. Acts as a regulator of mRNA stability by promoting degradation of m6A-containing mRNAs via interaction with the CCR4-NOT complex. The YTHDF paralogs (YTHDF1, YTHDF2 and YTHDF3) share m6A-containing mRNAs targets and act redundantly to mediate mRNA degradation and cellular differentiation. Required to facilitate learning and memory formation in the hippocampus by binding to m6A-containing neuronal mRNAs. Acts as a regulator of axon guidance by binding to m6A-containing ROBO3 transcripts. Acts as a negative regulator of antigen cross-presentation in myeloid dendritic cells. In the context of tumorigenesis, negative regulation of antigen cross-presentation limits the anti-tumor response by reducing efficiency of tumor-antigen cross-presentation. Promotes formation of phase-separated membraneless compartments, such as P-bodies or stress granules, by undergoing liquid-liquid phase separation upon binding to mRNAs containing multiple m6A-modified residues: polymethylated mRNAs act as a multivalent scaffold for the binding of YTHDF proteins, juxtaposing their disordered regions and thereby leading to phase separation. The resulting mRNA-YTHDF complexes then partition into different endogenous phase-separated membraneless compartments, such as P-bodies, stress granules or neuronal RNA granules. The sequence is that of YTH domain-containing family protein 1 from Mus musculus (Mouse).